The primary structure comprises 609 residues: Glutamine--fructose-6-phosphate aminotransferase [isomerizing] (609 aa).

Cysteine 2 serves as the catalytic Nucleophile; for GATase activity. The 217-residue stretch at 2–218 folds into the Glutamine amidotransferase type-2 domain; sequence CGIVGAIAQR…EGDIAEITRR (217 aa). SIS domains follow at residues 286–426 and 458–599; these read ADEL…LKGL and LAED…VDQP. Lysine 604 functions as the For Fru-6P isomerization activity in the catalytic mechanism.

As to quaternary structure, homodimer.

The protein resides in the cytoplasm. The catalysed reaction is D-fructose 6-phosphate + L-glutamine = D-glucosamine 6-phosphate + L-glutamate. Functionally, catalyzes the first step in hexosamine metabolism, converting fructose-6P into glucosamine-6P using glutamine as a nitrogen source. The chain is Glutamine--fructose-6-phosphate aminotransferase [isomerizing] from Salmonella paratyphi A (strain ATCC 9150 / SARB42).